The sequence spans 260 residues: Flap endonuclease Xni (260 aa).

A Mg(2+)-binding site is contributed by aspartate 109. Residues 165–259 (VKPSQLADYW…DIRFTGPNKA (95 aa)) form the 5'-3' exonuclease domain. K(+) is bound by residues leucine 176, proline 185, valine 187, and isoleucine 190. The interaction with DNA stretch occupies residues 189 to 194 (GIGPKA).

This sequence belongs to the Xni family. Mg(2+) serves as cofactor. The cofactor is K(+).

Has flap endonuclease activity. During DNA replication, flap endonucleases cleave the 5'-overhanging flap structure that is generated by displacement synthesis when DNA polymerase encounters the 5'-end of a downstream Okazaki fragment. This Vibrio parahaemolyticus serotype O3:K6 (strain RIMD 2210633) protein is Flap endonuclease Xni.